The primary structure comprises 437 residues: Glutamate-1-semialdehyde 2,1-aminomutase (437 aa).

An N6-(pyridoxal phosphate)lysine modification is found at lysine 273.

It belongs to the class-III pyridoxal-phosphate-dependent aminotransferase family. HemL subfamily. In terms of assembly, homodimer. The cofactor is pyridoxal 5'-phosphate.

Its subcellular location is the cytoplasm. It carries out the reaction (S)-4-amino-5-oxopentanoate = 5-aminolevulinate. It functions in the pathway porphyrin-containing compound metabolism; protoporphyrin-IX biosynthesis; 5-aminolevulinate from L-glutamyl-tRNA(Glu): step 2/2. This is Glutamate-1-semialdehyde 2,1-aminomutase from Chlamydia abortus (strain DSM 27085 / S26/3) (Chlamydophila abortus).